The sequence spans 625 residues: 1-deoxy-D-xylulose-5-phosphate synthase (625 aa).

Thiamine diphosphate is bound by residues His84 and 125 to 127 (GHS). Residue Asp156 participates in Mg(2+) binding. Thiamine diphosphate-binding positions include 157–158 (GA), Asn185, Phe292, and Glu373. Residue Asn185 participates in Mg(2+) binding.

It belongs to the transketolase family. DXPS subfamily. In terms of assembly, homodimer. The cofactor is Mg(2+). Requires thiamine diphosphate as cofactor.

The catalysed reaction is D-glyceraldehyde 3-phosphate + pyruvate + H(+) = 1-deoxy-D-xylulose 5-phosphate + CO2. The protein operates within metabolic intermediate biosynthesis; 1-deoxy-D-xylulose 5-phosphate biosynthesis; 1-deoxy-D-xylulose 5-phosphate from D-glyceraldehyde 3-phosphate and pyruvate: step 1/1. In terms of biological role, catalyzes the acyloin condensation reaction between C atoms 2 and 3 of pyruvate and glyceraldehyde 3-phosphate to yield 1-deoxy-D-xylulose-5-phosphate (DXP). The sequence is that of 1-deoxy-D-xylulose-5-phosphate synthase from Marinomonas sp. (strain MWYL1).